The following is a 621-amino-acid chain: Chaperone protein dnaK (621 aa).

Residues 597–621 are disordered; that stretch reads VYSSTQQDNSKTEDGSVIDTNSKEA.

Belongs to the heat shock protein 70 family.

It localises to the plastid. It is found in the chloroplast. Functionally, acts as a chaperone. The sequence is that of Chaperone protein dnaK from Gracilaria tenuistipitata var. liui (Red alga).